The chain runs to 239 residues: RING finger protein 151 (239 aa).

The RING-type zinc-finger motif lies at Cys-20 to Arg-58. The segment at Glu-101–Glu-156 adopts a TRAF-type zinc-finger fold.

Interacts with DTNBP1. As to expression, expressed in testis. Expressed in round spermatids of the stages VII-VIII semniniferous tubules. Expressed in elongating spermatids of stages VIII-IX seminiferous tubules (at protein level).

It localises to the cytoplasm. Its subcellular location is the nucleus. May be involved in acrosome formation of spermatids. This Mus musculus (Mouse) protein is RING finger protein 151 (Rnf151).